The chain runs to 113 residues: Photosystem II reaction center Psb28 protein (113 aa).

Belongs to the Psb28 family. As to quaternary structure, part of the photosystem II complex.

The protein resides in the cellular thylakoid membrane. The protein is Photosystem II reaction center Psb28 protein of Prochlorococcus marinus (strain NATL1A).